Consider the following 88-residue polypeptide: Apolipoprotein C-I (88 aa).

Residues 1–26 (MRLFLSLPVWVAVLAMVLEGPAPAQA) form the signal peptide.

It belongs to the apolipoprotein C1 family.

It localises to the secreted. Inhibitor of lipoprotein binding to the low density lipoprotein (LDL) receptor, LDL receptor-related protein, and very low density lipoprotein (VLDL) receptor. Associates with high density lipoproteins (HDL) and the triacylglycerol-rich lipoproteins in the plasma and makes up about 10% of the protein of the VLDL and 2% of that of HDL. Appears to interfere directly with fatty acid uptake and is also the major plasma inhibitor of cholesteryl ester transfer protein (CETP). Binds free fatty acids and reduces their intracellular esterification. Modulates the interaction of APOE with beta-migrating VLDL and inhibits binding of beta-VLDL to the LDL receptor-related protein. The polypeptide is Apolipoprotein C-I (APOC1) (Ursus maritimus (Polar bear)).